A 461-amino-acid polypeptide reads, in one-letter code: tRNA modification GTPase MnmE (461 aa).

The (6S)-5-formyl-5,6,7,8-tetrahydrofolate site is built by Arg23, Glu88, and Arg127. Residues 223 to 382 (GLSTVIVGKP…IEDALAEMVY (160 aa)) form the TrmE-type G domain. Position 233 (Asn233) interacts with K(+). Residues 233-238 (NVGKSS), 252-258 (TDVPGTT), and 277-280 (DTAG) each bind GTP. Ser237 provides a ligand contact to Mg(2+). K(+) is bound by residues Thr252, Val254, and Thr257. Thr258 provides a ligand contact to Mg(2+). Residue Lys461 participates in (6S)-5-formyl-5,6,7,8-tetrahydrofolate binding.

The protein belongs to the TRAFAC class TrmE-Era-EngA-EngB-Septin-like GTPase superfamily. TrmE GTPase family. In terms of assembly, homodimer. Heterotetramer of two MnmE and two MnmG subunits. It depends on K(+) as a cofactor.

It localises to the cytoplasm. Exhibits a very high intrinsic GTPase hydrolysis rate. Involved in the addition of a carboxymethylaminomethyl (cmnm) group at the wobble position (U34) of certain tRNAs, forming tRNA-cmnm(5)s(2)U34. The protein is tRNA modification GTPase MnmE of Alkaliphilus oremlandii (strain OhILAs) (Clostridium oremlandii (strain OhILAs)).